Reading from the N-terminus, the 81-residue chain is MQMKATILIVLVALFMIQQSEAGWLRKAAKSVGKFYYKHKYYIKAAWKIGRHALGDMTDEEFQDFMKEVEQAREEELQSRQ.

An N-terminal signal peptide occupies residues 1–22 (MQMKATILIVLVALFMIQQSEA). Tryptophan 24 carries the 6'-bromotryptophan modification. Position 26 is a 3,4-dihydroxyarginine (arginine 26). 4,5-dihydroxylysine is present on residues lysine 27, lysine 30, and lysine 34. Residues tyrosine 36 and tyrosine 37 each carry the 3',4'-dihydroxyphenylalanine modification. Lysine 38 bears the 4,5-dihydroxylysine mark. Lysine 40 carries the 5-hydroxylysine modification. Tyrosine 41 and tyrosine 42 each carry 3',4'-dihydroxyphenylalanine. Lysine 44 carries the 5-hydroxylysine modification. A Leucine amide modification is found at leucine 54. The propeptide at 56 to 81 (DMTDEEFQDFMKEVEQAREEELQSRQ) is removed in mature form.

Post-translationally, contains L-DOPA (3',4'-dihydroxyphenylalanine). Hemocytes and pharyngeal tissues.

Its subcellular location is the secreted. Functionally, bactericidal against several Gram-positive and Gram-negative bacteria. The polypeptide is Styelin-E (Styela clava (Sea squirt)).